We begin with the raw amino-acid sequence, 400 residues long: Acetyl-CoA decarbonylase/synthase complex subunit delta (400 aa).

The protein belongs to the CdhD family. In terms of assembly, heterodimer of delta and gamma chains. The ACDS complex is made up of alpha, epsilon, beta, gamma and delta chains with a probable stoichiometry of (alpha(2)epsilon(2))(4)-beta(8)-(gamma(1)delta(1))(8).

Part of a complex that catalyzes the reversible cleavage of acetyl-CoA, allowing autotrophic growth from CO(2). Probably maintains the overall quaternary structure of the ACDS complex. In Methanopyrus kandleri (strain AV19 / DSM 6324 / JCM 9639 / NBRC 100938), this protein is Acetyl-CoA decarbonylase/synthase complex subunit delta.